The sequence spans 371 residues: Protein SPATA31F3 (371 aa).

The helical transmembrane segment at 7-29 threads the bilayer; it reads ILWDVGSSVYTYGSLFIIALIIW. The stretch at 62 to 86 forms a coiled coil; that stretch reads LRVKKRTTKEETEKLQKLLSNMKRQ. 2 stretches are compositionally biased toward polar residues: residues 189 to 203 and 244 to 266; these read LSKV…LSSQ and PQQQ…SSSS. Disordered stretches follow at residues 189 to 222, 240 to 299, and 326 to 371; these read LSKV…STDQ, YHPA…EAEM, and YKSE…KRNI. Phosphoserine occurs at positions 197 and 198. Basic residues predominate over residues 277 to 287; sequence QKKRKKTKKLV. Residues 330-362 show a composition bias toward basic and acidic residues; it reads TGAKPKTGEPKKSSAKVRAEEPNLEKHAKDLKA.

It belongs to the SPATA31 family.

The protein localises to the membrane. The sequence is that of Protein SPATA31F3 (Spata31f3) from Mus musculus (Mouse).